A 503-amino-acid polypeptide reads, in one-letter code: Basic immunoglobulin-like variable motif-containing protein (503 aa).

Positions 1–26 are enriched in basic and acidic residues; the sequence is MPNVAETERSNDSGNGEHKSERKSPE. 3 disordered regions span residues 1 to 33, 152 to 184, and 438 to 469; these read MPNV…QGAV, TTNS…ECPQ, and ESQP…GRSF. Over residues 155–172 the composition is skewed to basic residues; that stretch reads SKHKSGNAKKQVSKRKTS. Basic and acidic residues predominate over residues 173–184; it reads DKKGRYQKECPQ.

The protein belongs to the BIVM family. Widely expressed. Expressed at higher level in spleen, ovary, small intestine, colon, peripheral blood leukocytes and liver. Also expressed in testis, ovary, aorta, appendix, trachea, pituitary gland, bladder, uterus, spinal cord, salivary gland, stomach, mammary gland and bone marrow. Weakly or not expressed in fetal spleen, adult thymus and certain cancer cell lines.

The protein localises to the cytoplasm. Its subcellular location is the nucleus. In Homo sapiens (Human), this protein is Basic immunoglobulin-like variable motif-containing protein (BIVM).